Reading from the N-terminus, the 411-residue chain is Arginine deiminase (411 aa).

C401 serves as the catalytic Amidino-cysteine intermediate.

It belongs to the arginine deiminase family. In terms of processing, glycosylated.

The protein localises to the cytoplasm. It catalyses the reaction L-arginine + H2O = L-citrulline + NH4(+). Its pathway is amino-acid degradation; L-arginine degradation via ADI pathway; carbamoyl phosphate from L-arginine: step 1/2. The chain is Arginine deiminase from Streptococcus pyogenes serotype M3 (strain ATCC BAA-595 / MGAS315).